The sequence spans 227 residues: 2,3-bisphosphoglycerate-dependent phosphoglycerate mutase (227 aa).

Residues 7–14 (RHGLSEWN), 20–21 (TG), R59, 86–89 (ERHY), K97, 113–114 (RR), and 182–183 (GN) each bind substrate. H8 functions as the Tele-phosphohistidine intermediate in the catalytic mechanism. The active-site Proton donor/acceptor is E86.

This sequence belongs to the phosphoglycerate mutase family. BPG-dependent PGAM subfamily. In terms of assembly, homodimer.

The catalysed reaction is (2R)-2-phosphoglycerate = (2R)-3-phosphoglycerate. The protein operates within carbohydrate degradation; glycolysis; pyruvate from D-glyceraldehyde 3-phosphate: step 3/5. In terms of biological role, catalyzes the interconversion of 2-phosphoglycerate and 3-phosphoglycerate. This Mannheimia succiniciproducens (strain KCTC 0769BP / MBEL55E) protein is 2,3-bisphosphoglycerate-dependent phosphoglycerate mutase.